A 386-amino-acid chain; its full sequence is DNA methyltransferase CcrM (386 aa).

One can recognise an RAMA domain in the interval 280-382; the sequence is LGKAELTVMT…LRKIIREQMA (103 aa).

The protein belongs to the N(4)/N(6)-methyltransferase family.

The catalysed reaction is a 2'-deoxyadenosine in DNA + S-adenosyl-L-methionine = an N(6)-methyl-2'-deoxyadenosine in DNA + S-adenosyl-L-homocysteine + H(+). In terms of biological role, a beta subtype methylase that recognizes the double-stranded sequence 5'-GANTC-3' and methylates A-2 on both strands. CcrM-mediated methylation has important cellular functions. Contributes to the accurate cell-cycle control of DNA replication and cellular morphology. The polypeptide is DNA methyltransferase CcrM (ccrM) (Brucella abortus (strain S19)).